We begin with the raw amino-acid sequence, 258 residues long: Peptide methionine sulfoxide reductase A4, chloroplastic (258 aa).

A chloroplast-targeting transit peptide spans 1–53 (MQVLVVSPPLIAAASLSKPLNSLSKAALSFSRAKPICPFPQTSRRPISVYKSP). The residue at position 54 (Met-54) is an N-acetylmethionine. The interval 62-89 (GFGSRPQAQADPSSAAIAQGPDDDVPSS) is disordered. Residue Ser-245 is modified to Phosphoserine.

It belongs to the MsrA Met sulfoxide reductase family. Expressed in rosette and cauline leaves, and at lower levels in stems and flowers (at protein level).

It is found in the plastid. Its subcellular location is the chloroplast stroma. It carries out the reaction L-methionyl-[protein] + [thioredoxin]-disulfide + H2O = L-methionyl-(S)-S-oxide-[protein] + [thioredoxin]-dithiol. It catalyses the reaction [thioredoxin]-disulfide + L-methionine + H2O = L-methionine (S)-S-oxide + [thioredoxin]-dithiol. Catalyzes the reduction of methionine sulfoxide (MetSO) to methionine in proteins. Plays a protective role against oxidative stress by restoring activity to proteins that have been inactivated by methionine oxidation. Prevents the methionine sulfoxidation of the heat shock protein HSP21 and its subsequent inactivation. MSRA family specifically reduces the MetSO S-enantiomer. This Arabidopsis thaliana (Mouse-ear cress) protein is Peptide methionine sulfoxide reductase A4, chloroplastic (MSR4).